The chain runs to 80 residues: Putative membrane protein insertion efficiency factor (80 aa).

The interval 60 to 80 (SKTGKDPVPDRFSLKRNQEGE) is disordered. A compositionally biased stretch (basic and acidic residues) spans 62 to 80 (TGKDPVPDRFSLKRNQEGE).

This sequence belongs to the UPF0161 family.

The protein resides in the cell membrane. In terms of biological role, could be involved in insertion of integral membrane proteins into the membrane. This Streptococcus pneumoniae serotype 4 (strain ATCC BAA-334 / TIGR4) protein is Putative membrane protein insertion efficiency factor.